A 171-amino-acid chain; its full sequence is Probable deoxyuridine 5'-triphosphate nucleotidohydrolase (171 aa).

It belongs to the dCTP deaminase family. Archaeal dUTPase subfamily.

It catalyses the reaction dUTP + H2O = dUMP + diphosphate + H(+). Its pathway is pyrimidine metabolism; dUMP biosynthesis; dUMP from dCTP (dUTP route): step 2/2. In terms of biological role, this enzyme is involved in nucleotide metabolism: it produces dUMP, the immediate precursor of thymidine nucleotides and it decreases the intracellular concentration of dUTP so that uracil cannot be incorporated into DNA. The chain is Probable deoxyuridine 5'-triphosphate nucleotidohydrolase from Methanosarcina acetivorans (strain ATCC 35395 / DSM 2834 / JCM 12185 / C2A).